A 396-amino-acid polypeptide reads, in one-letter code: Elongation factor Tu 2 (396 aa).

One can recognise a tr-type G domain in the interval 10–206 (KPHVNIGTIG…AVDEYIPTPE (197 aa)). Residues 19 to 26 (GHVDHGKT) are G1. 19–26 (GHVDHGKT) contacts GTP. A Mg(2+)-binding site is contributed by Thr26. Residues 60–64 (GITIN) form a G2 region. The G3 stretch occupies residues 81–84 (DCPG). GTP-binding positions include 81–85 (DCPGH) and 136–139 (NKVD). The G4 stretch occupies residues 136-139 (NKVD). The segment at 174-176 (SAL) is G5.

Belongs to the TRAFAC class translation factor GTPase superfamily. Classic translation factor GTPase family. EF-Tu/EF-1A subfamily. In terms of assembly, monomer.

Its subcellular location is the cytoplasm. The enzyme catalyses GTP + H2O = GDP + phosphate + H(+). GTP hydrolase that promotes the GTP-dependent binding of aminoacyl-tRNA to the A-site of ribosomes during protein biosynthesis. This chain is Elongation factor Tu 2, found in Hyphomonas neptunium (strain ATCC 15444).